Reading from the N-terminus, the 318-residue chain is Transaldolase (318 aa).

The active-site Schiff-base intermediate with substrate is lysine 126.

The protein belongs to the transaldolase family. Type 1 subfamily. Homodimer.

The protein resides in the cytoplasm. It catalyses the reaction D-sedoheptulose 7-phosphate + D-glyceraldehyde 3-phosphate = D-erythrose 4-phosphate + beta-D-fructose 6-phosphate. It functions in the pathway carbohydrate degradation; pentose phosphate pathway; D-glyceraldehyde 3-phosphate and beta-D-fructose 6-phosphate from D-ribose 5-phosphate and D-xylulose 5-phosphate (non-oxidative stage): step 2/3. Transaldolase is important for the balance of metabolites in the pentose-phosphate pathway. This is Transaldolase from Variovorax paradoxus (strain S110).